A 539-amino-acid polypeptide reads, in one-letter code: Chaperonin GroEL 1 (539 aa).

ATP-binding positions include 29–32 (TLGP), 86–90 (DGTTT), Gly413, 478–480 (NAA), and Asp494. Residues 520 to 539 (IVDKPAEPEDDGHGHHGHAH) form a disordered region. Positions 523–533 (KPAEPEDDGHG) are enriched in basic and acidic residues.

Belongs to the chaperonin (HSP60) family. In terms of assembly, forms a cylinder of 14 subunits composed of two heptameric rings stacked back-to-back. Interacts with the co-chaperonin GroES.

The protein localises to the cytoplasm. It catalyses the reaction ATP + H2O + a folded polypeptide = ADP + phosphate + an unfolded polypeptide.. Functionally, together with its co-chaperonin GroES, plays an essential role in assisting protein folding. The GroEL-GroES system forms a nano-cage that allows encapsulation of the non-native substrate proteins and provides a physical environment optimized to promote and accelerate protein folding. The sequence is that of Chaperonin GroEL 1 from Mycobacterium ulcerans (strain Agy99).